The following is a 96-amino-acid chain: Tenecin-3 (96 aa).

Residues 1–18 (MKTFVICLILVVAVSAAP) form the signal peptide. The disordered stretch occupies residues 19 to 96 (DHHDGHLGGH…HQGGYKTHGH (78 aa)). Tandem repeats lie at residues 23–26 (GHLG), 31–34 (GHQG), 35–38 (GQQG), 39–42 (GHLG), 43–46 (GQQG), 47–50 (GHLG), 51–54 (GHQG), 59–62 (GHLG), 63–66 (GHQG), 67–70 (GIGG), 77–80 (GQHG), and 86–89 (GHQG). A 12 X 4 AA repeats of G-X-X-G region spans residues 23-89 (GHLGGHQTGH…GPGTGAGHQG (67 aa)). The span at 26-89 (GGHQTGHQGG…GPGTGAGHQG (64 aa)) shows a compositional bias: gly residues.

To H.diomphalia holotricin 3.

The protein resides in the secreted. Antifungal heat stable protein produced in response to injury. It is active against C.albicans. No antibacterial activity against Gram-positive and Gram-negative bacteria. In Tenebrio molitor (Yellow mealworm beetle), this protein is Tenecin-3.